A 208-amino-acid polypeptide reads, in one-letter code: Uracil phosphoribosyltransferase (208 aa).

5-phospho-alpha-D-ribose 1-diphosphate contacts are provided by residues arginine 78, arginine 103, and 130 to 138 (DPMFATGGT). Residues isoleucine 193 and 198–200 (GDA) each bind uracil. Aspartate 199 lines the 5-phospho-alpha-D-ribose 1-diphosphate pocket.

The protein belongs to the UPRTase family. The cofactor is Mg(2+).

The catalysed reaction is UMP + diphosphate = 5-phospho-alpha-D-ribose 1-diphosphate + uracil. Its pathway is pyrimidine metabolism; UMP biosynthesis via salvage pathway; UMP from uracil: step 1/1. Its activity is regulated as follows. Allosterically activated by GTP. In terms of biological role, catalyzes the conversion of uracil and 5-phospho-alpha-D-ribose 1-diphosphate (PRPP) to UMP and diphosphate. This is Uracil phosphoribosyltransferase from Campylobacter concisus (strain 13826).